The primary structure comprises 372 residues: Beta-1,3-N-acetylglucosaminyltransferase radical fringe (372 aa).

Residues 1-10 (MNSSCLGLRR) lie on the Cytoplasmic side of the membrane. A helical; Signal-anchor for type II membrane protein transmembrane segment spans residues 11–27 (TCFLLSVTAAAVLLLLL). Topologically, residues 28–372 (PRGQPPAAPR…TIWCPNKKMS (345 aa)) are lumenal. Residues 30–48 (GQPPAAPRRRPPPAGPSRP) show a composition bias toward pro residues. A disordered region spans residues 30-96 (GQPPAAPRRR…RVRMGPPGGS (67 aa)). The span at 64–78 (DRGGGSGAAGGGRGV) shows a compositional bias: gly residues. A substrate-binding site is contributed by R120. Residue N159 is glycosylated (N-linked (GlcNAc...) asparagine). Disulfide bonds link C160–C171 and C189–C253. D193 lines the substrate pocket. D194 is a binding site for Mn(2+). D283 is an active-site residue. Mn(2+) is bound at residue H307. Cysteines 357 and 366 form a disulfide.

The protein belongs to the glycosyltransferase 31 family. It depends on Mn(2+) as a cofactor.

Its subcellular location is the golgi apparatus membrane. It catalyses the reaction 3-O-(alpha-L-fucosyl)-L-threonyl-[EGF-like domain protein] + UDP-N-acetyl-alpha-D-glucosamine = 3-O-(N-acetyl-beta-D-glucosaminyl-(1-&gt;3)-alpha-L-fucosyl)-L-threonyl-[EGF-like domain protein] + UDP + H(+). The catalysed reaction is 3-O-(alpha-L-fucosyl)-L-seryl-[EGF-like domain protein] + UDP-N-acetyl-alpha-D-glucosamine = 3-O-(N-acetyl-beta-D-glucosaminyl-(1-&gt;3)-alpha-L-fucosyl)-L-seryl-[EGF-like domain protein] + UDP + H(+). Functionally, glycosyltransferase that initiates the elongation of O-linked fucose residues attached to EGF-like repeats in the extracellular domain of Notch molecules. Plays an important role in limb outgrowth, it directs the formation and positioning of the apical ectodermal ridge (AER), one of the key organizer centers of vertebrate limb development. This is Beta-1,3-N-acetylglucosaminyltransferase radical fringe (RFNG) from Gallus gallus (Chicken).